The primary structure comprises 126 residues: Protein FMP49, mitochondrial (126 aa).

The protein resides in the mitochondrion. The polypeptide is Protein FMP49, mitochondrial (Saccharomyces cerevisiae (strain ATCC 204508 / S288c) (Baker's yeast)).